Here is a 1217-residue protein sequence, read N- to C-terminus: DNA-directed RNA polymerase subunit beta' (1217 aa).

Zn(2+) contacts are provided by C60, C62, C75, and C78. 3 residues coordinate Mg(2+): D449, D451, and D453. Zn(2+)-binding residues include C821, C895, C902, and C905.

It belongs to the RNA polymerase beta' chain family. As to quaternary structure, the RNAP catalytic core consists of 2 alpha, 1 beta, 1 beta' and 1 omega subunit. When a sigma factor is associated with the core the holoenzyme is formed, which can initiate transcription. The cofactor is Mg(2+). It depends on Zn(2+) as a cofactor.

The catalysed reaction is RNA(n) + a ribonucleoside 5'-triphosphate = RNA(n+1) + diphosphate. Its function is as follows. DNA-dependent RNA polymerase catalyzes the transcription of DNA into RNA using the four ribonucleoside triphosphates as substrates. This chain is DNA-directed RNA polymerase subunit beta', found in Lactobacillus helveticus (strain DPC 4571).